A 619-amino-acid polypeptide reads, in one-letter code: Dynein axonemal intermediate chain 2 (619 aa).

WD repeat units follow at residues 214-254, 261-302, 362-401, 405-445, and 450-489; these read KPSS…LVAE, SHRD…EPTE, GHHG…SSIM, YHMA…CDPA, and VCDD…STLQ. Residues 566–619 are disordered; it reads EALKKKPKPKKASIEVEGEDELEDIAGEEEESGIIMGEDTGEDDMDEKNEGGAP. Residues 581-597 are compositionally biased toward acidic residues; sequence VEGEDELEDIAGEEEES.

It belongs to the dynein intermediate chain family. Consists of at least two heavy chains and a number of intermediate and light chains. Interacts with DNAAF2. Interacts with DNAAF6/PIH1D3. Interacts with HEATR2; probably involved in outer arm dynein assembly. Interacts with CFAP53.

The protein resides in the cytoplasm. The protein localises to the cytoskeleton. It is found in the cilium axoneme. It localises to the dynein axonemal particle. Part of the dynein complex of respiratory cilia. The protein is Dynein axonemal intermediate chain 2 (Dnai2) of Rattus norvegicus (Rat).